Consider the following 156-residue polypeptide: Nucleosome assembly protein 1-like 5 (156 aa).

A compositionally biased stretch (basic and acidic residues) spans 1–16 (MADPEKQGPAESRAED). Positions 1-58 (MADPEKQGPAESRAEDEVMEGAQGGEDAATGDSAAAPAAEEPQAPAENAPKPKKDFME) are disordered. Residues 34 to 49 (AAAPAAEEPQAPAENA) are compositionally biased toward low complexity. Positions 68 to 94 (VLALKKLQKRCDKIEAKFDKEFQALEK) form a coiled coil. The interval 120 to 156 (TLEGEDDEDDEEEDDEEEEEEEEAAAGATGGPNFAKK) is disordered. Residues 122 to 143 (EGEDDEDDEEEDDEEEEEEEEA) show a composition bias toward acidic residues.

This sequence belongs to the nucleosome assembly protein (NAP) family.

Its subcellular location is the nucleus. This is Nucleosome assembly protein 1-like 5 (Nap1l5) from Mus musculus (Mouse).